Consider the following 117-residue polypeptide: DNA-directed RNA polymerase subunit omega (117 aa).

Over residues 96-105 (KEEAEEEAKQ) the composition is skewed to basic and acidic residues. A disordered region spans residues 96–117 (KEEAEEEAKQKNSRAAKAAAAE). Residues 108–117 (SRAAKAAAAE) show a composition bias toward low complexity.

The protein belongs to the RNA polymerase subunit omega family. In terms of assembly, the RNAP catalytic core consists of 2 alpha, 1 beta, 1 beta' and 1 omega subunit. When a sigma factor is associated with the core the holoenzyme is formed, which can initiate transcription.

The catalysed reaction is RNA(n) + a ribonucleoside 5'-triphosphate = RNA(n+1) + diphosphate. Functionally, promotes RNA polymerase assembly. Latches the N- and C-terminal regions of the beta' subunit thereby facilitating its interaction with the beta and alpha subunits. In Lactococcus lactis subsp. cremoris (strain SK11), this protein is DNA-directed RNA polymerase subunit omega.